Here is a 26-residue protein sequence, read N- to C-terminus: Maculatin-3.1 (26 aa).

At Ala26 the chain carries Alanine amide.

Expressed by the skin dorsal glands.

The protein resides in the secreted. Its function is as follows. Shows antibacterial activity against S.uberis. The sequence is that of Maculatin-3.1 from Ranoidea genimaculata (Brown-spotted tree frog).